A 255-amino-acid chain; its full sequence is MADELIIGDKALTSRLFIGTGKFASHEIMGQAVSQSGAQVVTVALRRVDLDNPQESELKFIPAGCVLMPNTSGARTAEEAVKIARIARAAGCGNWVKIEVVTDQRYLLPDNYETVKATEILAKEGFVVLPYMNPDLMVAKRLKEAGAAAIMPLGAPIGSNRGLKTREMIRILIEEIDLPIIVDAGIGKPSEAMEAMEMGAAAVLVNTAIATARDPVAMARAFSMAVEAGRMAYLAGLAPTREYAEASSPLTGFLV.

Residue Lys97 is the Schiff-base intermediate with DXP of the active site. 1-deoxy-D-xylulose 5-phosphate is bound by residues Gly158, 184–185 (AG), and 206–207 (NT).

The protein belongs to the ThiG family. As to quaternary structure, homotetramer. Forms heterodimers with either ThiH or ThiS.

The protein localises to the cytoplasm. The enzyme catalyses [ThiS sulfur-carrier protein]-C-terminal-Gly-aminoethanethioate + 2-iminoacetate + 1-deoxy-D-xylulose 5-phosphate = [ThiS sulfur-carrier protein]-C-terminal Gly-Gly + 2-[(2R,5Z)-2-carboxy-4-methylthiazol-5(2H)-ylidene]ethyl phosphate + 2 H2O + H(+). The protein operates within cofactor biosynthesis; thiamine diphosphate biosynthesis. In terms of biological role, catalyzes the rearrangement of 1-deoxy-D-xylulose 5-phosphate (DXP) to produce the thiazole phosphate moiety of thiamine. Sulfur is provided by the thiocarboxylate moiety of the carrier protein ThiS. In vitro, sulfur can be provided by H(2)S. The sequence is that of Thiazole synthase from Moorella thermoacetica (strain ATCC 39073 / JCM 9320).